We begin with the raw amino-acid sequence, 417 residues long: Candidapepsin-4 (417 aa).

An N-terminal signal peptide occupies residues 1–18 (MFLQNILSVLAFALLIDA). A propeptide spans 19 to 75 (APVKRSTGFVTLDFNVKRSLVDPKDPTVEVKRSPLFLDIEPTEIPVDDTGRNDVGKR) (activation peptide). Residues 89–403 (YSADITIGSN…DLDDRKISMA (315 aa)) enclose the Peptidase A1 domain. Residue D107 is part of the active site. C122 and C134 are disulfide-bonded. A glycan (N-linked (GlcNAc...) asparagine) is linked at N137. Residue D293 is part of the active site. Residues C331 and C369 are joined by a disulfide bond.

Belongs to the peptidase A1 family. Post-translationally, O-glycosylated.

The protein resides in the secreted. It catalyses the reaction Preferential cleavage at the carboxyl of hydrophobic amino acids, but fails to cleave 15-Leu-|-Tyr-16, 16-Tyr-|-Leu-17 and 24-Phe-|-Phe-25 of insulin B chain. Activates trypsinogen, and degrades keratin.. This Candida albicans (strain WO-1) (Yeast) protein is Candidapepsin-4 (SAP4).